Here is a 462-residue protein sequence, read N- to C-terminus: Cytochrome P450 20A1 (462 aa).

Residues 4 to 24 form a helical membrane-spanning segment; that stretch reads FAIFAVTFLLALVGAVLYLYP. Cys409 is a heme binding site.

The protein belongs to the cytochrome P450 family. Heme serves as cofactor.

The protein resides in the membrane. The chain is Cytochrome P450 20A1 (Cyp20a1) from Rattus norvegicus (Rat).